The sequence spans 92 residues: DNA-directed RNA polymerase subunit Rpo11 (92 aa).

It belongs to the archaeal Rpo11/eukaryotic RPB11/RPC19 RNA polymerase subunit family. Part of the 13-subunit RNA polymerase complex.

The protein localises to the cytoplasm. The catalysed reaction is RNA(n) + a ribonucleoside 5'-triphosphate = RNA(n+1) + diphosphate. Functionally, DNA-dependent RNA polymerase (RNAP) catalyzes the transcription of DNA into RNA using the four ribonucleoside triphosphates as substrates. The protein is DNA-directed RNA polymerase subunit Rpo11 of Saccharolobus solfataricus (strain ATCC 35092 / DSM 1617 / JCM 11322 / P2) (Sulfolobus solfataricus).